A 309-amino-acid chain; its full sequence is Ribosomal RNA small subunit methyltransferase H (309 aa).

Residues 33–35 (GGH), Asp53, Phe79, Asp100, and Gln107 contribute to the S-adenosyl-L-methionine site.

This sequence belongs to the methyltransferase superfamily. RsmH family.

The protein localises to the cytoplasm. The catalysed reaction is cytidine(1402) in 16S rRNA + S-adenosyl-L-methionine = N(4)-methylcytidine(1402) in 16S rRNA + S-adenosyl-L-homocysteine + H(+). In terms of biological role, specifically methylates the N4 position of cytidine in position 1402 (C1402) of 16S rRNA. The polypeptide is Ribosomal RNA small subunit methyltransferase H (Clostridium botulinum (strain Langeland / NCTC 10281 / Type F)).